The chain runs to 1107 residues: Probable chromatin-remodeling complex ATPase chain (1107 aa).

Disordered regions lie at residues 1-124 and 177-217; these read MAKP…KREK and GNQS…GSGG. 4 stretches are compositionally biased toward acidic residues: residues 8–25, 33–43, 53–65, and 89–114; these read DEEEEEVSSSGEEEEEQS, GEEEDEEEEEA, GGEEEEVDEEEIE, and EGDEESQSTEDDEAVVGEDDDADEAE. Residues 121–147 adopt a coiled-coil conformation; it reads KREKARLKEMQKLKKQKIQEILDTQNA. Basic residues predominate over residues 183 to 193; the sequence is KKPRGRGRHAS. Over residues 197–211 the composition is skewed to acidic residues; sequence EEEEDEEYLKEEEDA. Positions 243–408 constitute a Helicase ATP-binding domain; that stretch reads IRLYENGING…WSLLNFLLPE (166 aa). ATP is bound at residue 256-263; that stretch reads DEMGLGKT. Residues 359–362 carry the DEAH box motif; sequence DEAH. Positions 536–687 constitute a Helicase C-terminal domain; the sequence is LLDKLLPKLK…ALVIQQGRLA (152 aa). SANT domains lie at 877-929 and 978-1039; these read EGFA…ERYK and QNKG…DTLI. A coiled-coil region spans residues 1029 to 1067; it reads QELARRCDTLIRLVEKENQEYDEQERQARKDKRMAKNMT. The interval 1049-1107 is disordered; sequence YDEQERQARKDKRMAKNMTPTKRSALRVSEGETTPSNSFKRRRQSLMDDYVGSGRRKRG.

This sequence belongs to the SNF2/RAD54 helicase family. ISWI subfamily.

It is found in the nucleus. In terms of biological role, possesses intrinsic ATP-dependent nucleosome-remodeling activity. Constitutes the catalytic subunit of several complexes capable of forming ordered nucleosome arrays on chromatin in vitro. This Oryza sativa subsp. japonica (Rice) protein is Probable chromatin-remodeling complex ATPase chain.